We begin with the raw amino-acid sequence, 376 residues long: Oligopeptide transport system permease protein OppC (376 aa).

Transmembrane regions (helical) follow at residues 46–66 (WAIL…IVPL), 149–169 (YPLL…WASM), 173–193 (LWIA…YGAI), 209–229 (IIEI…GATF), 242–262 (VIFT…RIYI), 297–317 (LAVV…SLVF), and 341–361 (IALI…TRVF). Positions 169–362 (MAKSLWIAIV…ILTVSTRVFA (194 aa)) constitute an ABC transmembrane type-1 domain.

The protein belongs to the binding-protein-dependent transport system permease family. OppBC subfamily. As to quaternary structure, the complex is composed of two ATP-binding proteins (OppD and OppF), two transmembrane proteins (OppB and OppC) and a solute-binding protein (OppA).

It localises to the cell membrane. Its function is as follows. Part of the ABC transporter complex OppABCDF involved in the uptake of oligopeptides. Probably responsible for the translocation of the substrate across the membrane. This chain is Oligopeptide transport system permease protein OppC (oppC), found in Mycoplasma pneumoniae (strain ATCC 29342 / M129 / Subtype 1) (Mycoplasmoides pneumoniae).